Reading from the N-terminus, the 190-residue chain is Probable thymidylate kinase (190 aa).

Residue 9 to 16 (GIDGAGKT) participates in ATP binding.

The protein belongs to the thymidylate kinase family.

The enzyme catalyses dTMP + ATP = dTDP + ADP. The polypeptide is Probable thymidylate kinase (tmk1) (Sulfurisphaera tokodaii (strain DSM 16993 / JCM 10545 / NBRC 100140 / 7) (Sulfolobus tokodaii)).